A 514-amino-acid chain; its full sequence is Maturase K (514 aa).

The protein belongs to the intron maturase 2 family. MatK subfamily.

Its subcellular location is the plastid. The protein localises to the chloroplast. Its function is as follows. Usually encoded in the trnK tRNA gene intron. Probably assists in splicing its own and other chloroplast group II introns. This chain is Maturase K, found in Drosophyllum lusitanicum (Portuguese sundew).